The sequence spans 248 residues: DNA repair protein RecO (248 aa).

The protein belongs to the RecO family.

Its function is as follows. Involved in DNA repair and RecF pathway recombination. This chain is DNA repair protein RecO, found in Bradyrhizobium sp. (strain BTAi1 / ATCC BAA-1182).